The following is a 727-amino-acid chain: Procollagen-lysine,2-oxoglutarate 5-dioxygenase 1 (727 aa).

An N-terminal signal peptide occupies residues 1–18 (MRPLLLLALLGWLLLAEA). Residues Asn-163, Asn-197, and Asn-538 are each glycosylated (N-linked (GlcNAc...) asparagine). The Fe2OG dioxygenase domain maps to 636-727 (QFDLAFVVRY…RYIAVSFVDP (92 aa)). 2 residues coordinate Fe cation: His-656 and Asp-658. An N-linked (GlcNAc...) asparagine glycan is attached at Asn-686. His-708 contacts Fe cation. The active site involves Arg-718.

Homodimer. Identified in a complex with P3H3 and P3H4. Fe(2+) is required as a cofactor. The cofactor is L-ascorbate.

The protein resides in the rough endoplasmic reticulum membrane. The catalysed reaction is L-lysyl-[collagen] + 2-oxoglutarate + O2 = (5R)-5-hydroxy-L-lysyl-[collagen] + succinate + CO2. Its function is as follows. Part of a complex composed of PLOD1, P3H3 and P3H4 that catalyzes hydroxylation of lysine residues in collagen alpha chains and is required for normal assembly and cross-linkling of collagen fibrils. Forms hydroxylysine residues in -Xaa-Lys-Gly- sequences in collagens. These hydroxylysines serve as sites of attachment for carbohydrate units and are essential for the stability of the intermolecular collagen cross-links. This chain is Procollagen-lysine,2-oxoglutarate 5-dioxygenase 1 (PLOD1), found in Homo sapiens (Human).